Consider the following 274-residue polypeptide: Rhamnulose-1-phosphate aldolase (274 aa).

Residue Glu-117 is part of the active site. Zn(2+) is bound by residues His-141, His-143, and His-212.

This sequence belongs to the aldolase class II family. RhaD subfamily. In terms of assembly, homotetramer. Zn(2+) serves as cofactor.

The protein localises to the cytoplasm. It catalyses the reaction L-rhamnulose 1-phosphate = (S)-lactaldehyde + dihydroxyacetone phosphate. It participates in carbohydrate degradation; L-rhamnose degradation; glycerone phosphate from L-rhamnose: step 3/3. In terms of biological role, catalyzes the reversible cleavage of L-rhamnulose-1-phosphate to dihydroxyacetone phosphate (DHAP) and L-lactaldehyde. The sequence is that of Rhamnulose-1-phosphate aldolase from Escherichia coli O81 (strain ED1a).